Reading from the N-terminus, the 284-residue chain is Serine/threonine-protein phosphatase Pgam5, mitochondrial (284 aa).

Residues 8–24 (LGVPTATLAVGTLLLGD) traverse the membrane as a helical segment.

It belongs to the phosphoglycerate mutase family. BPG-dependent PGAM subfamily. In terms of assembly, interacts with skn-1 isoforms a and c.

It is found in the mitochondrion outer membrane. The catalysed reaction is O-phospho-L-seryl-[protein] + H2O = L-seryl-[protein] + phosphate. It carries out the reaction O-phospho-L-threonyl-[protein] + H2O = L-threonyl-[protein] + phosphate. Its function is as follows. Displays phosphatase activity for serine/threonine residues. Has apparently no phosphoglycerate mutase activity. The polypeptide is Serine/threonine-protein phosphatase Pgam5, mitochondrial (pgam-5) (Caenorhabditis elegans).